Reading from the N-terminus, the 380-residue chain is Glutamyl-tRNA reductase 1 (380 aa).

Substrate is bound by residues 42–45 (TCNR), Ser-93, 98–100 (ETD), and Gln-104. Cys-43 (nucleophile) is an active-site residue. Residue 172–177 (GAGAVG) coordinates NADP(+).

The protein belongs to the glutamyl-tRNA reductase family. Homodimer.

It catalyses the reaction (S)-4-amino-5-oxopentanoate + tRNA(Glu) + NADP(+) = L-glutamyl-tRNA(Glu) + NADPH + H(+). Its pathway is porphyrin-containing compound metabolism; protoporphyrin-IX biosynthesis; 5-aminolevulinate from L-glutamyl-tRNA(Glu): step 1/2. Its function is as follows. Catalyzes the NADPH-dependent reduction of glutamyl-tRNA(Glu) to glutamate 1-semialdehyde (GSA). The protein is Glutamyl-tRNA reductase 1 of Pyrobaculum calidifontis (strain DSM 21063 / JCM 11548 / VA1).